We begin with the raw amino-acid sequence, 392 residues long: ABSCISIC ACID-INSENSITIVE 5-like protein 4 (392 aa).

Positions 1–22 are disordered; it reads MGTHIDINNLGGDTSRGNESKP. 3 positions are modified to phosphoserine: Ser28, Ser50, and Ser96. Thr135 carries the post-translational modification Phosphothreonine. The interval 266–297 is disordered; it reads NMGGAGGTVTATSPGTSSAENNTWSSPVPYVF. Residues 274–291 show a composition bias toward polar residues; the sequence is VTATSPGTSSAENNTWSS. The bZIP domain occupies 311–374; that stretch reads VERRQKRMIK…NSELKEFSKQ (64 aa). The basic motif stretch occupies residues 313–332; it reads RRQKRMIKNRESAARSRARK. Residues 339–360 form a leucine-zipper region; that stretch reads LEAEIESLKLVNQDLQKKQAEI.

Belongs to the bZIP family. ABI5 subfamily. In terms of assembly, DNA-binding heterodimer. Interacts with ABI3 and the AFP proteins AFP1, AFP2, AFP3 and AFP4. Phosphorylated by CPK4, CPK11, SRK2D and SRK2I in vitro.

Its subcellular location is the nucleus. In terms of biological role, binds to the ABA-responsive element (ABRE). Could participate in abscisic acid-regulated gene expression. The sequence is that of ABSCISIC ACID-INSENSITIVE 5-like protein 4 (ABF1) from Arabidopsis thaliana (Mouse-ear cress).